The following is a 433-amino-acid chain: N-lysine methyltransferase SMYD2 (433 aa).

In terms of domain architecture, SET spans 7–241 (GGLERFCSAG…PGDEVFTSYI (235 aa)). 17–19 (KGR) is an S-adenosyl-L-methionine binding site. Residues Cys-52, Cys-55, Cys-65, Cys-68, Cys-74, Cys-78, His-86, and Cys-90 each contribute to the Zn(2+) site. An MYND-type zinc finger spans residues 52 to 90 (CECCFARKEGLSKCGRCKQAFYCDVECQKEDWPLHKLEC). S-adenosyl-L-methionine contacts are provided by residues His-137, 206-207 (NH), and 258-260 (YFF). Ser-283 carries the phosphoserine modification.

It belongs to the class V-like SAM-binding methyltransferase superfamily. Interacts (via MYND-type zinc finger) with EPB41L3. Interacts (via SET domain) with p53/TP53. Interacts with RB1 and HSP90AA1. Interacts with RNA polymerase II and HELZ. Interacts with SIN3A and HDAC1. As to expression, highly expressed in heart, skeletal muscle and brain tissue. During cardiac development, it is differentially expressed with highest expression in the neonatal heart while very low expression is detected at 12.5 dpc and adult. Specifically expressed in cardiomyocytes (at protein level).

Its subcellular location is the cytoplasm. It is found in the cytosol. The protein localises to the nucleus. The catalysed reaction is L-lysyl(4)-[histone H3] + 3 S-adenosyl-L-methionine = N(6),N(6),N(6)-trimethyl-L-lysyl(4)-[histone H3] + 3 S-adenosyl-L-homocysteine + 3 H(+). It catalyses the reaction L-lysyl-[protein] + S-adenosyl-L-methionine = N(6)-methyl-L-lysyl-[protein] + S-adenosyl-L-homocysteine + H(+). Functionally, protein-lysine N-methyltransferase that methylates both histones and non-histone proteins, including p53/TP53 and RB1. Specifically trimethylates histone H3 'Lys-4' (H3K4me3) in vivo. The activity requires interaction with HSP90alpha. Shows even higher methyltransferase activity on p53/TP53. Monomethylates 'Lys-370' of p53/TP53, leading to decreased DNA-binding activity and subsequent transcriptional regulation activity of p53/TP53. Monomethylates RB1 at 'Lys-860'. In Mus musculus (Mouse), this protein is N-lysine methyltransferase SMYD2 (Smyd2).